A 163-amino-acid chain; its full sequence is Olfactory marker protein (163 aa).

Residue Ala-2 is modified to N-acetylalanine.

It belongs to the olfactory marker protein family. Interacts with BEX1 and BEX2. In terms of tissue distribution, uniquely associated with mature olfactory receptor neurons.

The protein resides in the cytoplasm. May act as a modulator of the olfactory signal-transduction cascade. This is Olfactory marker protein (Omp) from Rattus norvegicus (Rat).